Consider the following 108-residue polypeptide: ER membrane protein complex subunit 6 (108 aa).

3 consecutive transmembrane segments (helical) span residues 21-41, 45-65, and 86-106; these read VVSF…GILG, YEGL…LFAL, and ILDG…LVYV.

It belongs to the EMC6 family.

It localises to the endoplasmic reticulum membrane. The protein is ER membrane protein complex subunit 6 of Schizosaccharomyces pombe (strain 972 / ATCC 24843) (Fission yeast).